The following is a 302-amino-acid chain: 4-hydroxy-tetrahydrodipicolinate synthase (302 aa).

T55 serves as a coordination point for pyruvate. The Proton donor/acceptor role is filled by Y144. K172 acts as the Schiff-base intermediate with substrate in catalysis. A pyruvate-binding site is contributed by V214.

It belongs to the DapA family. Homotetramer; dimer of dimers.

It is found in the cytoplasm. It carries out the reaction L-aspartate 4-semialdehyde + pyruvate = (2S,4S)-4-hydroxy-2,3,4,5-tetrahydrodipicolinate + H2O + H(+). It participates in amino-acid biosynthesis; L-lysine biosynthesis via DAP pathway; (S)-tetrahydrodipicolinate from L-aspartate: step 3/4. Functionally, catalyzes the condensation of (S)-aspartate-beta-semialdehyde [(S)-ASA] and pyruvate to 4-hydroxy-tetrahydrodipicolinate (HTPA). This is 4-hydroxy-tetrahydrodipicolinate synthase from Synechococcus sp. (strain CC9311).